Consider the following 196-residue polypeptide: Ribosome maturation factor RimP (196 aa).

The tract at residues 164–196 (LAPQKPNKPGPKKTGHEKKKPSNESAAGKPRAE) is disordered. Residues 173 to 182 (GPKKTGHEKK) show a composition bias toward basic residues.

This sequence belongs to the RimP family.

It is found in the cytoplasm. Functionally, required for maturation of 30S ribosomal subunits. This Xanthomonas oryzae pv. oryzae (strain MAFF 311018) protein is Ribosome maturation factor RimP.